Reading from the N-terminus, the 254-residue chain is 3-deoxy-manno-octulosonate cytidylyltransferase (254 aa).

This sequence belongs to the KdsB family.

It localises to the cytoplasm. It catalyses the reaction 3-deoxy-alpha-D-manno-oct-2-ulosonate + CTP = CMP-3-deoxy-beta-D-manno-octulosonate + diphosphate. Its pathway is nucleotide-sugar biosynthesis; CMP-3-deoxy-D-manno-octulosonate biosynthesis; CMP-3-deoxy-D-manno-octulosonate from 3-deoxy-D-manno-octulosonate and CTP: step 1/1. It functions in the pathway bacterial outer membrane biogenesis; lipopolysaccharide biosynthesis. Activates KDO (a required 8-carbon sugar) for incorporation into bacterial lipopolysaccharide in Gram-negative bacteria. This is 3-deoxy-manno-octulosonate cytidylyltransferase from Chlamydia pneumoniae (Chlamydophila pneumoniae).